We begin with the raw amino-acid sequence, 346 residues long: Tryptophan--tRNA ligase (346 aa).

ATP-binding positions include 21–23 (QPT) and 30–31 (GN). Residues 22–31 (PTADSYHLGN) carry the 'HIGH' region motif. Asp-147 serves as a coordination point for L-tryptophan. ATP is bound by residues 159-161 (GED), Ile-198, and 207-211 (KMSKS). The 'KMSKS' region signature appears at 207 to 211 (KMSKS).

The protein belongs to the class-I aminoacyl-tRNA synthetase family. In terms of assembly, homodimer.

Its subcellular location is the cytoplasm. The catalysed reaction is tRNA(Trp) + L-tryptophan + ATP = L-tryptophyl-tRNA(Trp) + AMP + diphosphate + H(+). In terms of biological role, catalyzes the attachment of tryptophan to tRNA(Trp). This is Tryptophan--tRNA ligase from Corynebacterium efficiens (strain DSM 44549 / YS-314 / AJ 12310 / JCM 11189 / NBRC 100395).